Reading from the N-terminus, the 1151-residue chain is Trafficking protein particle complex subunit 9 (1151 aa).

It belongs to the NIBP family. Part of the multisubunit TRAPP (transport protein particle) complex.

The protein resides in the golgi apparatus. Its subcellular location is the cis-Golgi network. It is found in the endoplasmic reticulum. It localises to the cytoplasm. Functionally, functions as an activator of NF-kappa-B through increased phosphorylation of the IKK complex. May function in neuronal cells differentiation. May play a role in vesicular transport from endoplasmic reticulum to Golgi. The protein is Trafficking protein particle complex subunit 9 (trappc9) of Xenopus laevis (African clawed frog).